The following is a 72-amino-acid chain: Exodeoxyribonuclease 7 small subunit (72 aa).

This sequence belongs to the XseB family. Heterooligomer composed of large and small subunits.

It is found in the cytoplasm. The enzyme catalyses Exonucleolytic cleavage in either 5'- to 3'- or 3'- to 5'-direction to yield nucleoside 5'-phosphates.. Its function is as follows. Bidirectionally degrades single-stranded DNA into large acid-insoluble oligonucleotides, which are then degraded further into small acid-soluble oligonucleotides. The polypeptide is Exodeoxyribonuclease 7 small subunit (Chlamydia muridarum (strain MoPn / Nigg)).